Consider the following 274-residue polypeptide: Thymidylate synthase (274 aa).

DUMP is bound at residue R21. Residue H51 participates in (6R)-5,10-methylene-5,6,7,8-tetrahydrofolate binding. 123 to 124 (RR) contacts dUMP. Residue C156 is the Nucleophile of the active site. DUMP-binding positions include 176 to 179 (RSAD), N187, and 217 to 219 (HIY). D179 contacts (6R)-5,10-methylene-5,6,7,8-tetrahydrofolate. Residue S273 participates in (6R)-5,10-methylene-5,6,7,8-tetrahydrofolate binding.

Belongs to the thymidylate synthase family. Bacterial-type ThyA subfamily. In terms of assembly, homodimer.

The protein localises to the cytoplasm. It carries out the reaction dUMP + (6R)-5,10-methylene-5,6,7,8-tetrahydrofolate = 7,8-dihydrofolate + dTMP. Its pathway is pyrimidine metabolism; dTTP biosynthesis. Its function is as follows. Catalyzes the reductive methylation of 2'-deoxyuridine-5'-monophosphate (dUMP) to 2'-deoxythymidine-5'-monophosphate (dTMP) while utilizing 5,10-methylenetetrahydrofolate (mTHF) as the methyl donor and reductant in the reaction, yielding dihydrofolate (DHF) as a by-product. This enzymatic reaction provides an intracellular de novo source of dTMP, an essential precursor for DNA biosynthesis. This is Thymidylate synthase from Francisella tularensis subsp. tularensis (strain SCHU S4 / Schu 4).